The chain runs to 154 residues: Xanthine-guanine phosphoribosyltransferase (154 aa).

5-phospho-alpha-D-ribose 1-diphosphate is bound by residues 37–38 (RG) and 90–98 (DDLVDTGNT). A Mg(2+)-binding site is contributed by Asp91. The guanine site is built by Asp94 and Ile137. Xanthine contacts are provided by Asp94 and Ile137. Residues 94–98 (DTGNT) and 136–137 (WI) each bind GMP.

This sequence belongs to the purine/pyrimidine phosphoribosyltransferase family. XGPT subfamily. Homotetramer. The cofactor is Mg(2+).

It localises to the cell inner membrane. It carries out the reaction GMP + diphosphate = guanine + 5-phospho-alpha-D-ribose 1-diphosphate. The catalysed reaction is XMP + diphosphate = xanthine + 5-phospho-alpha-D-ribose 1-diphosphate. It catalyses the reaction IMP + diphosphate = hypoxanthine + 5-phospho-alpha-D-ribose 1-diphosphate. It participates in purine metabolism; GMP biosynthesis via salvage pathway; GMP from guanine: step 1/1. The protein operates within purine metabolism; XMP biosynthesis via salvage pathway; XMP from xanthine: step 1/1. Functionally, purine salvage pathway enzyme that catalyzes the transfer of the ribosyl-5-phosphate group from 5-phospho-alpha-D-ribose 1-diphosphate (PRPP) to the N9 position of the 6-oxopurines guanine and xanthine to form the corresponding ribonucleotides GMP (guanosine 5'-monophosphate) and XMP (xanthosine 5'-monophosphate), with the release of PPi. To a lesser extent, also acts on hypoxanthine. The chain is Xanthine-guanine phosphoribosyltransferase from Histophilus somni (strain 129Pt) (Haemophilus somnus).